The following is a 267-amino-acid chain: MSLRVLGSGTWPSAPKMFLLLTALQVLAIAMTQSQEDENKIIGGHTCTRSSQPWQAALLAGPRRRFLCGGALLSGQWVITAAHCGRPILQVALGKHNLRRWEATQQVLRVVRQVTHPNYNSRTHDNDLMLLQLQQPARIGRAVRPIEVTQACASPGTSCRVSGWGTISSPIARYPASLQCVNINISPDEVCQKAYPRTITPGMVCAGVPQGGKDSCQGDSGGPLVCRGQLQGLVSWGMERCALPGYPGVYTNLCKYRSWIEETMRDK.

Residues 1 to 34 (MSLRVLGSGTWPSAPKMFLLLTALQVLAIAMTQS) form the signal peptide. A propeptide spans 35 to 40 (QEDENK) (activation peptide). A Peptidase S1 domain is found at 41 to 265 (IIGGHTCTRS…YRSWIEETMR (225 aa)). Cystine bridges form between cysteine 47–cysteine 180, cysteine 68–cysteine 84, cysteine 159–cysteine 226, cysteine 191–cysteine 205, and cysteine 216–cysteine 241. Catalysis depends on charge relay system residues histidine 83 and aspartate 127. The active-site Charge relay system is the serine 220.

Belongs to the peptidase S1 family. Kallikrein subfamily. In terms of processing, proteolytic cleavage of the activation peptide produces the active enzyme. Highly expressed in CNS, bone marrow and fetal liver. Also expressed in breast, thyroid, kidney, colon, pancreas, spleen, prostate, uterus, small intestine, placenta and skeletal muscle. Among 40 tissues tested, the highest expression is detected in skin followed by breast and prostate (at protein level). Expressed in stratum corneum by sweat ducts and sweat glands and detected in sweat (at protein level).

The protein localises to the secreted. It is found in the extracellular space. Inhibited by SERPINA1, SERPINC1, SERPINE1, SERPINF2, aprotinin, soybean, trypsin inhibitor and leupeptin. Inhibited by serine protease inhibitor SPINK5. Has an autoproteolytic activity which may have a regulatory effect. Activated by citrate and inhibited by zinc and to a lower extent by manganese. Functionally, serine-type endopeptidase with a dual trypsin-like and chymotrypsin-like substrate specificity. May activate/inactivate the proteinase-activated receptors F2R, F2RL1 and F2RL3 and other kallikreins including KLK1, KLK3, KLK5 and KLK11. May function in seminal clot liquefaction through direct cleavage of the semenogelin SEMG1 and SEMG2 and activation of KLK3. May function through desmoglein DSG1 cleavage in epidermal desquamation a process by which the most superficial corneocytes are shed from the skin surface. May be involved in several aspects of tumor progression including growth, invasion and angiogenesis. In Homo sapiens (Human), this protein is Kallikrein-14 (KLK14).